The primary structure comprises 277 residues: Intercellular adhesion molecule 2 (277 aa).

An N-terminal signal peptide occupies residues 1–22 (MSSFACWSLSLLILFYSPGSGE). Over 23-222 (KAFEVYIWSE…EVYEPMQDNQ (200 aa)) the chain is Extracellular. 2 Ig-like C2-type domains span residues 39 to 98 (TESW…CSGK) and 127 to 196 (GEDF…LDLR). N-linked (GlcNAc...) asparagine glycans are attached at residues Asn-45, Asn-82, Asn-158, Asn-176, and Asn-186. Disulfide bonds link Cys-46–Cys-91, Cys-50–Cys-95, and Cys-134–Cys-189. A helical membrane pass occupies residues 223 to 247 (MVIIIVVVSILLFLFVTSVLLCFIF). Over 248–277 (GQHWHRRRTGTYGVLAAWRRLPRAFRARPV) the chain is Cytoplasmic. A required for interaction with EZR, MSN and RDX and co-localization to microvilli region spans residues 250-277 (HWHRRRTGTYGVLAAWRRLPRAFRARPV).

It belongs to the immunoglobulin superfamily. ICAM family. In terms of assembly, interacts with RDX, EZR and MSN. In terms of tissue distribution, expressed in endothelial cells and leukocytes. High levels found in lung.

Its subcellular location is the membrane. The protein resides in the cell projection. The protein localises to the microvillus. Its function is as follows. ICAM proteins are ligands for the leukocyte adhesion protein LFA-1 (integrin alpha-L/beta-2). ICAM2 may play a role in lymphocyte recirculation by blocking LFA-1-dependent cell adhesion. It mediates adhesive interactions important for antigen-specific immune response, NK-cell mediated clearance, lymphocyte recirculation, and other cellular interactions important for immune response and surveillance. This is Intercellular adhesion molecule 2 (Icam2) from Mus musculus (Mouse).